The chain runs to 641 residues: Threonine--tRNA ligase (641 aa).

Positions M1–A61 constitute a TGS domain. Positions D240–P538 are catalytic. C334, H385, and H515 together coordinate Zn(2+).

The protein belongs to the class-II aminoacyl-tRNA synthetase family. As to quaternary structure, homodimer. Zn(2+) is required as a cofactor.

It localises to the cytoplasm. The enzyme catalyses tRNA(Thr) + L-threonine + ATP = L-threonyl-tRNA(Thr) + AMP + diphosphate + H(+). Catalyzes the attachment of threonine to tRNA(Thr) in a two-step reaction: L-threonine is first activated by ATP to form Thr-AMP and then transferred to the acceptor end of tRNA(Thr). Also edits incorrectly charged L-seryl-tRNA(Thr). The polypeptide is Threonine--tRNA ligase (Phytoplasma australiense).